The chain runs to 264 residues: Taurine import ATP-binding protein TauB (264 aa).

The ABC transporter domain occupies 4–233 (LQLERISAQY…RYAAGESARA (230 aa)). 38–45 (GPSGSGKT) is an ATP binding site.

It belongs to the ABC transporter superfamily. Taurine importer (TC 3.A.1.17.1) family. As to quaternary structure, the complex is composed of two ATP-binding proteins (TauB), two transmembrane proteins (TauC) and a solute-binding protein (TauA).

Its subcellular location is the cell inner membrane. It carries out the reaction taurine(out) + ATP + H2O = taurine(in) + ADP + phosphate + H(+). Part of the ABC transporter complex TauABC involved in taurine import. Responsible for energy coupling to the transport system. The chain is Taurine import ATP-binding protein TauB from Pseudomonas fluorescens (strain Pf0-1).